Consider the following 326-residue polypeptide: Beta-ketoacyl-[acyl-carrier-protein] synthase III (326 aa).

Active-site residues include C112 and H251. Positions 252-256 (QANSR) are ACP-binding. N281 is a catalytic residue.

Belongs to the thiolase-like superfamily. FabH family. In terms of assembly, homodimer.

The protein resides in the cytoplasm. The enzyme catalyses malonyl-[ACP] + acetyl-CoA + H(+) = 3-oxobutanoyl-[ACP] + CO2 + CoA. Its pathway is lipid metabolism; fatty acid biosynthesis. Catalyzes the condensation reaction of fatty acid synthesis by the addition to an acyl acceptor of two carbons from malonyl-ACP. Catalyzes the first condensation reaction which initiates fatty acid synthesis and may therefore play a role in governing the total rate of fatty acid production. Possesses both acetoacetyl-ACP synthase and acetyl transacylase activities. Its substrate specificity determines the biosynthesis of branched-chain and/or straight-chain of fatty acids. The chain is Beta-ketoacyl-[acyl-carrier-protein] synthase III from Clostridium botulinum (strain Okra / Type B1).